Consider the following 106-residue polypeptide: Iron-sulfur cluster assembly protein CyaY (106 aa).

This sequence belongs to the frataxin family.

Involved in iron-sulfur (Fe-S) cluster assembly. May act as a regulator of Fe-S biogenesis. This chain is Iron-sulfur cluster assembly protein CyaY, found in Escherichia fergusonii (strain ATCC 35469 / DSM 13698 / CCUG 18766 / IAM 14443 / JCM 21226 / LMG 7866 / NBRC 102419 / NCTC 12128 / CDC 0568-73).